A 204-amino-acid chain; its full sequence is Dihydroorotase (204 aa).

Residue H34 coordinates Zn(2+). L79 serves as a coordination point for substrate. D107 contacts Zn(2+). Residue D107 is part of the active site. Residues H111 and A123 each coordinate substrate.

Belongs to the metallo-dependent hydrolases superfamily. DHOase family. Class II DHOase subfamily. In terms of assembly, homodimer. It depends on Zn(2+) as a cofactor.

The enzyme catalyses (S)-dihydroorotate + H2O = N-carbamoyl-L-aspartate + H(+). It functions in the pathway pyrimidine metabolism; UMP biosynthesis via de novo pathway; (S)-dihydroorotate from bicarbonate: step 3/3. Catalyzes the reversible cyclization of carbamoyl aspartate to dihydroorotate. This Serratia marcescens protein is Dihydroorotase.